A 476-amino-acid chain; its full sequence is NADH-quinone oxidoreductase subunit N (476 aa).

A run of 14 helical transmembrane segments spans residues 5-25 (LALI…LMLG), 38-58 (LSAL…FGVE), 70-90 (AFGG…ILVA), 97-117 (GMRA…GIMA), 122-142 (LMTL…LASF), 157-177 (FVLG…LYGF), 196-218 (IGLI…AVPF), 231-253 (TPVT…ARIV), 264-284 (WQQI…VGAI), 292-312 (LLAY…AAGT), 318-338 (GVLT…LVVL), 364-384 (LAAA…LFGF), 401-421 (PLAV…IAII), and 445-465 (IVAA…PALA).

Belongs to the complex I subunit 2 family. As to quaternary structure, NDH-1 is composed of 14 different subunits. Subunits NuoA, H, J, K, L, M, N constitute the membrane sector of the complex.

It localises to the cell inner membrane. The catalysed reaction is a quinone + NADH + 5 H(+)(in) = a quinol + NAD(+) + 4 H(+)(out). NDH-1 shuttles electrons from NADH, via FMN and iron-sulfur (Fe-S) centers, to quinones in the respiratory chain. The immediate electron acceptor for the enzyme in this species is believed to be ubiquinone. Couples the redox reaction to proton translocation (for every two electrons transferred, four hydrogen ions are translocated across the cytoplasmic membrane), and thus conserves the redox energy in a proton gradient. The polypeptide is NADH-quinone oxidoreductase subunit N (Sphingopyxis alaskensis (strain DSM 13593 / LMG 18877 / RB2256) (Sphingomonas alaskensis)).